The sequence spans 456 residues: Adenylosuccinate lyase (456 aa).

Residues 15–16, 90–92, and 122–123 contribute to the N(6)-(1,2-dicarboxyethyl)-AMP site; these read RY, NHD, and TS. H171 functions as the Proton donor/acceptor in the catalytic mechanism. Residue Q248 coordinates N(6)-(1,2-dicarboxyethyl)-AMP. The active-site Proton donor/acceptor is S296. Residues S297, 302-304, N310, R336, and 341-345 contribute to the N(6)-(1,2-dicarboxyethyl)-AMP site; these read KVN and STVLR.

This sequence belongs to the lyase 1 family. Adenylosuccinate lyase subfamily. Homotetramer.

The catalysed reaction is N(6)-(1,2-dicarboxyethyl)-AMP = fumarate + AMP. It catalyses the reaction (2S)-2-[5-amino-1-(5-phospho-beta-D-ribosyl)imidazole-4-carboxamido]succinate = 5-amino-1-(5-phospho-beta-D-ribosyl)imidazole-4-carboxamide + fumarate. The enzyme catalyses (2S)-2-amino-2'-deoxyadenylo-succinate = dZMP + fumarate. Its pathway is purine metabolism; AMP biosynthesis via de novo pathway; AMP from IMP: step 2/2. The protein operates within purine metabolism; IMP biosynthesis via de novo pathway; 5-amino-1-(5-phospho-D-ribosyl)imidazole-4-carboxamide from 5-amino-1-(5-phospho-D-ribosyl)imidazole-4-carboxylate: step 2/2. It functions in the pathway purine metabolism. Its function is as follows. Catalyzes two reactions in de novo purine nucleotide biosynthesis. Catalyzes the breakdown of 5-aminoimidazole- (N-succinylocarboxamide) ribotide (SAICAR or 2-[5-amino-1-(5-phospho-beta-D-ribosyl)imidazole-4-carboxamido]succinate) to 5-aminoimidazole-4-carboxamide ribotide (AICAR or 5-amino-1-(5-phospho-beta-D-ribosyl)imidazole-4-carboxamide) and fumarate, and of adenylosuccinate (ADS or N(6)-(1,2-dicarboxyethyl)-AMP) to adenosine monophosphate (AMP) and fumarate. (Microbial infection) Catalyzes the conversion of 2-amino-2'-deoxyadenylo-succinate to dZMP and fumarate, when the bacterium is infected by a phage that produces the substrate of this reaction, a step in the synthesis of dZTP (2-amino-2'-deoxyadenosine 5'-triphosphate), which is a nucleotide then used by the phage as a DNA polymerase substrate. The sequence is that of Adenylosuccinate lyase from Vibrio cholerae serotype O1 (strain ATCC 39541 / Classical Ogawa 395 / O395).